The chain runs to 237 residues: U2 small nuclear ribonucleoprotein A' (237 aa).

LRR repeat units lie at residues 53–74 (RTNIVDFTNNELEELPPLGHND), 75–95 (TVHTLLLSRNRLGRLDASRLP), and 97–118 (YLVNLNLAMNRFEKFEQLQGLR). Residues 132-170 (NVICHKEQYRETVIALCPQLAVLDGERVRQAERQAAPQN) form the LRRCT domain. Positions 161–182 (QAERQAAPQNEKTDTPTEGPQP) are disordered.

Belongs to the U2 small nuclear ribonucleoprotein A family. As to quaternary structure, associated with the spliceosome.

It is found in the nucleus. Functionally, involved in pre-mRNA splicing. The polypeptide is U2 small nuclear ribonucleoprotein A' (LEA1) (Eremothecium gossypii (strain ATCC 10895 / CBS 109.51 / FGSC 9923 / NRRL Y-1056) (Yeast)).